The primary structure comprises 858 residues: MENELPVPHTSSSACATSSTSGASSSSGCNNSSSGGSGRPTGPQISVYSGIPDRQTVQVIQQALHRQPSTAAQYLQQMYAAQQQHLMLQTAALQQQHLSSAQLQSLAAVQQASLVSNRQGSTSGSNVSAQAPAQSSSINLAASPAAAQLLNRAQSVNSAAASGIAQQAVLLGNTSSPALTASQAQMYLRAQMLIFTPTATVATVQPELGTGSPARPPTPAQVQNLTLRTQQTPAAAASGPTPTQPVLPSLALKPTPGGSQPLPTPAQSRNTAQASPAGAKPGIADSVMEPHKKGDGNSSVPGSMEGRAGLSRTVPAVAAHPLIAPAYAQLQPHQLLPQPSSKHLQPQFVIQQQPQPQQQQPPPQQSRPVLQAEPHPQLASVSPSVALQPSSEAHAMPLGPVTPALPLQCPTANLHKPGGSQQCHPPTPDTGPQNGHPEGVPHTPQRRFQHTSAVILQLQPASPPQQCVPDDWKEVAPGEKSVPETRSGPSPHQQAIVTAMPGGLPVPTSPNIQPSPAHETGQGIVHALTDLSSPGMTSGNGNSASSIAGTAPQNGENKPPQAIVKPQILTHVIEGFVIQEGAEPFPVGRSSLLVGNLKKKYAQGFLPEKLPQQDHTTTTDSEMEEPYLQESKEEGAPLKLKCELCGRVDFAYKFKRSKRFCSMACAKRYNVGCTKRVGLFHSDRSKLQKAGAATHNRRRASKASLPPLTKDTKKQPTGTVPLSVTAALQLTHSQEDSSRCSDNSSYEEPLSPISASSSTSRRRQGQRDLELPDMHMRDLVGMGHHFLPSEPTKWNVEDVYEFIRSLPGCQEIAEEFRAQEIDGQALLLLKEDHLMSAMNIKLGPALKIYARISMLKDS.

6 disordered regions span residues Met1 to Gln76, Gln230 to Arg307, Pro337 to Gln388, Leu407 to Pro444, Lys473 to Gln493, and Thr529 to Gln561. 2 stretches are compositionally biased toward low complexity: residues Thr10–Ser34 and Gln230–Thr241. The interval Ser33–Asp53 is interaction with BMI1. A compositionally biased stretch (polar residues) spans Pro265–Ala274. Residues Pro337–Gln358 show a composition bias toward low complexity. Residues Ala379–Gln388 are compositionally biased toward polar residues. Basic and acidic residues predominate over residues Lys473–Pro483. Over residues Thr537–Ala551 the composition is skewed to low complexity. The HD1 signature appears at Lys558–Val587. Glycyl lysine isopeptide (Lys-Gly) (interchain with G-Cter in SUMO2) cross-links involve residues Lys598 and Lys600. Position 619 is a phosphothreonine (Thr619). Residue Ser621 is modified to Phosphoserine. Lys632 participates in a covalent cross-link: Glycyl lysine isopeptide (Lys-Gly) (interchain with G-Cter in SUMO2). An FCS-type zinc finger spans residues Glu633 to Lys667. Zn(2+)-binding residues include Cys642, Cys645, Cys661, and Cys665. 2 disordered regions span residues Gln688 to Val720 and His732 to Asp768. Lys702 is covalently cross-linked (Glycyl lysine isopeptide (Lys-Gly) (interchain with G-Cter in SUMO2)). At Ser751 the chain carries Phosphoserine. The SAM domain maps to Trp794 to Ser858. A Glycyl lysine isopeptide (Lys-Gly) (interchain with G-Cter in SUMO2) cross-link involves residue Lys847.

Component of a PRC1-like complex. Interacts with CBX4. Interacts with BMI1, PCGF2, PHC1 and RNF2. Interacts with CHTOP. Interacts with the N-terminal region of the SP1 transcription factor and with MAPKAPK2. Interacts with SAMD7 and SAMD11.

The protein localises to the nucleus. In terms of biological role, component of a Polycomb group (PcG) multiprotein PRC1-like complex, a complex class required to maintain the transcriptionally repressive state of many genes, including Hox genes, throughout development. PcG PRC1 complex acts via chromatin remodeling and modification of histones; it mediates monoubiquitination of histone H2A 'Lys-119', rendering chromatin heritably changed in its expressibility. This chain is Polyhomeotic-like protein 2 (PHC2), found in Homo sapiens (Human).